We begin with the raw amino-acid sequence, 230 residues long: Cytidylate kinase (230 aa).

Residue 10 to 18 coordinates ATP; sequence GFSSTGKST.

It belongs to the cytidylate kinase family. Type 1 subfamily.

It localises to the cytoplasm. It catalyses the reaction CMP + ATP = CDP + ADP. The catalysed reaction is dCMP + ATP = dCDP + ADP. The polypeptide is Cytidylate kinase (Flavobacterium johnsoniae (strain ATCC 17061 / DSM 2064 / JCM 8514 / BCRC 14874 / CCUG 350202 / NBRC 14942 / NCIMB 11054 / UW101) (Cytophaga johnsonae)).